Reading from the N-terminus, the 883-residue chain is Phosphoenolpyruvate carboxylase (883 aa).

Active-site residues include histidine 138 and lysine 546.

It belongs to the PEPCase type 1 family. The cofactor is Mg(2+).

The enzyme catalyses oxaloacetate + phosphate = phosphoenolpyruvate + hydrogencarbonate. In terms of biological role, forms oxaloacetate, a four-carbon dicarboxylic acid source for the tricarboxylic acid cycle. This Salmonella gallinarum (strain 287/91 / NCTC 13346) protein is Phosphoenolpyruvate carboxylase.